The chain runs to 151 residues: Deoxyuridine 5'-triphosphate nucleotidohydrolase (151 aa).

Substrate contacts are provided by residues 70 to 72, asparagine 83, 87 to 89, and methionine 97; these read RSG and LID.

It belongs to the dUTPase family. Requires Mg(2+) as cofactor.

The enzyme catalyses dUTP + H2O = dUMP + diphosphate + H(+). It functions in the pathway pyrimidine metabolism; dUMP biosynthesis; dUMP from dCTP (dUTP route): step 2/2. This enzyme is involved in nucleotide metabolism: it produces dUMP, the immediate precursor of thymidine nucleotides and it decreases the intracellular concentration of dUTP so that uracil cannot be incorporated into DNA. The protein is Deoxyuridine 5'-triphosphate nucleotidohydrolase of Salmonella enteritidis PT4 (strain P125109).